We begin with the raw amino-acid sequence, 44 residues long: Mu-conotoxin-like Cal 12.1.3b (44 aa).

4 cysteine pairs are disulfide-bonded: cysteine 3–cysteine 16, cysteine 11–cysteine 28, cysteine 18–cysteine 33, and cysteine 27–cysteine 38. Residue proline 23 is modified to 4-hydroxyproline. 2 positions are modified to 6'-bromotryptophan: tryptophan 36 and tryptophan 37. 4-hydroxyproline is present on proline 39. A 6'-bromotryptophan modification is found at tryptophan 43.

Expressed by the venom duct.

It localises to the secreted. Its function is as follows. Mu-conotoxins block voltage-gated sodium channels. This toxin reversibly blocks voltage-gated sodium channel in cephalopods, with no alteration in the voltage dependence of sodium conductance or on the kinetics of inactivation. This is Mu-conotoxin-like Cal 12.1.3b from Californiconus californicus (California cone).